A 619-amino-acid chain; its full sequence is Kininogen-2 (619 aa).

A signal peptide spans 1-18 (MKLITILFLCSRLLPSLT). Q19 is subject to Pyrrolidone carboxylic acid. Positions 27–131 (CNDQDVFKAV…IQTCLITPAE (105 aa)) constitute a Cystatin kininogen-type 1 domain. Cystine bridges form between C27–C589, C82–C93, C106–C125, C141–C144, C205–C217, C228–C247, C261–C264, C325–C337, and C348–C367. N-linked (GlcNAc...) asparagine glycosylation occurs at N87. O-linked (GalNAc...) threonine; partial glycosylation is present at T136. In terms of domain architecture, Cystatin kininogen-type 2 spans 150–253 (TKSPDLEPVL…SQKCDLYPGE (104 aa)). N-linked (GlcNAc...) asparagine glycans are attached at residues N168 and N169. An N-linked (GlcNAc...) asparagine; partial glycan is attached at N197. A glycan (N-linked (GlcNAc...) asparagine) is linked at N204. A Cystatin kininogen-type 3 domain is found at 270-373 (VDSPDLEEAL…TVNCQPLGQT (104 aa)). The N-linked (GlcNAc...) asparagine glycan is linked to N280. Position 380 is a 4-hydroxyproline (P380). The disordered stretch occupies residues 394 to 495 (EGSTTVSLPH…GKNNGKHYDW (102 aa)). O-linked (GalNAc...) serine glycosylation is present at S396. Residues T397 and T398 are each glycosylated (O-linked (GalNAc...) threonine). Residues S400 and S404 are each glycosylated (O-linked (GalNAc...) serine). Basic residues predominate over residues 442-490 (GHKHKHDQGHGHHRSHGLGHGHQKQHGLGHGHKHGHGHGKHKNKGKNNG). An O-linked (GalNAc...) serine glycan is attached at S510. Residues T518, T522, T534, T546, T551, and T568 are each glycosylated (O-linked (GalNAc...) threonine).

In terms of processing, bradykinin is released from kininogen by plasma kallikrein. As to expression, plasma.

It is found in the secreted. The protein localises to the extracellular space. In terms of biological role, (1) Kininogens are inhibitors of thiol proteases; (2) HMW-kininogen plays an important role in blood coagulation by helping to position optimally prekallikrein and factor XI next to factor XII; (3) HMW-kininogen inhibits the thrombin- and plasmin-induced aggregation of thrombocytes; (4) the active peptide bradykinin that is released from HMW-kininogen shows a variety of physiological effects: (4A) influence in smooth muscle contraction, (4B) induction of hypotension, (4C) natriuresis and diuresis, (4D) decrease in blood glucose level, (4E) it is a mediator of inflammation and causes (4E1) increase in vascular permeability, (4E2) stimulation of nociceptors (4E3) release of other mediators of inflammation (e.g. prostaglandins), (4F) it has a cardioprotective effect (directly via bradykinin action, indirectly via endothelium-derived relaxing factor action); (5) LMW-kininogen inhibits the aggregation of thrombocytes; (6) LMW-kininogen is in contrast to HMW-kininogen not involved in blood clotting. In Bos taurus (Bovine), this protein is Kininogen-2 (KNG2).